Reading from the N-terminus, the 283-residue chain is DNA repair protein RecO (283 aa).

It belongs to the RecO family.

In terms of biological role, involved in DNA repair and RecF pathway recombination. This is DNA repair protein RecO from Gloeothece citriformis (strain PCC 7424) (Cyanothece sp. (strain PCC 7424)).